A 657-amino-acid polypeptide reads, in one-letter code: ABC1 family protein YPL109C, mitochondrial (657 aa).

The transit peptide at 1–15 directs the protein to the mitochondrion; that stretch reads MSFLKFAYRNSWRYY.

It belongs to the protein kinase superfamily. ADCK protein kinase family.

Its subcellular location is the mitochondrion. The chain is ABC1 family protein YPL109C, mitochondrial from Saccharomyces cerevisiae (strain ATCC 204508 / S288c) (Baker's yeast).